Here is a 314-residue protein sequence, read N- to C-terminus: 4-hydroxy-3-methylbut-2-enyl diphosphate reductase (314 aa).

Cys12 contributes to the [4Fe-4S] cluster binding site. The (2E)-4-hydroxy-3-methylbut-2-enyl diphosphate site is built by His41 and His74. Dimethylallyl diphosphate contacts are provided by His41 and His74. Positions 41 and 74 each coordinate isopentenyl diphosphate. Cys96 is a [4Fe-4S] cluster binding site. Residue His124 participates in (2E)-4-hydroxy-3-methylbut-2-enyl diphosphate binding. His124 lines the dimethylallyl diphosphate pocket. His124 serves as a coordination point for isopentenyl diphosphate. Catalysis depends on Glu126, which acts as the Proton donor. Thr167 contributes to the (2E)-4-hydroxy-3-methylbut-2-enyl diphosphate binding site. A [4Fe-4S] cluster-binding site is contributed by Cys197. (2E)-4-hydroxy-3-methylbut-2-enyl diphosphate-binding residues include Ser225, Ser226, Asn227, and Ser269. Dimethylallyl diphosphate contacts are provided by Ser225, Ser226, Asn227, and Ser269. Residues Ser225, Ser226, Asn227, and Ser269 each coordinate isopentenyl diphosphate.

It belongs to the IspH family. It depends on [4Fe-4S] cluster as a cofactor.

The catalysed reaction is isopentenyl diphosphate + 2 oxidized [2Fe-2S]-[ferredoxin] + H2O = (2E)-4-hydroxy-3-methylbut-2-enyl diphosphate + 2 reduced [2Fe-2S]-[ferredoxin] + 2 H(+). It carries out the reaction dimethylallyl diphosphate + 2 oxidized [2Fe-2S]-[ferredoxin] + H2O = (2E)-4-hydroxy-3-methylbut-2-enyl diphosphate + 2 reduced [2Fe-2S]-[ferredoxin] + 2 H(+). It participates in isoprenoid biosynthesis; dimethylallyl diphosphate biosynthesis; dimethylallyl diphosphate from (2E)-4-hydroxy-3-methylbutenyl diphosphate: step 1/1. It functions in the pathway isoprenoid biosynthesis; isopentenyl diphosphate biosynthesis via DXP pathway; isopentenyl diphosphate from 1-deoxy-D-xylulose 5-phosphate: step 6/6. Its function is as follows. Catalyzes the conversion of 1-hydroxy-2-methyl-2-(E)-butenyl 4-diphosphate (HMBPP) into a mixture of isopentenyl diphosphate (IPP) and dimethylallyl diphosphate (DMAPP). Acts in the terminal step of the DOXP/MEP pathway for isoprenoid precursor biosynthesis. The sequence is that of 4-hydroxy-3-methylbut-2-enyl diphosphate reductase from Actinobacillus pleuropneumoniae serotype 3 (strain JL03).